Consider the following 154-residue polypeptide: Transcriptional repressor NrdR (154 aa).

A zinc finger spans residues 3 to 34 (CPFCGHAATQVIDTRMSEEGDTVRRRRRCESC). An ATP-cone domain is found at 49–139 (PAVVKKNGSR…VYRSFEDLAE (91 aa)).

Belongs to the NrdR family. It depends on Zn(2+) as a cofactor.

Functionally, negatively regulates transcription of bacterial ribonucleotide reductase nrd genes and operons by binding to NrdR-boxes. This Ralstonia pickettii (strain 12J) protein is Transcriptional repressor NrdR.